The following is a 396-amino-acid chain: Tyrosine--tRNA ligase (396 aa).

Tyr36 lines the L-tyrosine pocket. The 'HIGH' region motif lies at 41 to 50 (PTANSLHIGN). The L-tyrosine site is built by Tyr165 and Gln169. Positions 225–229 (KMGKT) match the 'KMSKS' region motif. Lys228 provides a ligand contact to ATP. Positions 331-394 (TNLIDYLVET…KKSFLTIKTV (64 aa)) constitute an S4 RNA-binding domain.

This sequence belongs to the class-I aminoacyl-tRNA synthetase family. TyrS type 1 subfamily. In terms of assembly, homodimer.

It is found in the cytoplasm. It catalyses the reaction tRNA(Tyr) + L-tyrosine + ATP = L-tyrosyl-tRNA(Tyr) + AMP + diphosphate + H(+). In terms of biological role, catalyzes the attachment of tyrosine to tRNA(Tyr) in a two-step reaction: tyrosine is first activated by ATP to form Tyr-AMP and then transferred to the acceptor end of tRNA(Tyr). This is Tyrosine--tRNA ligase from Mycoplasma genitalium (strain ATCC 33530 / DSM 19775 / NCTC 10195 / G37) (Mycoplasmoides genitalium).